We begin with the raw amino-acid sequence, 304 residues long: Glutamyl-Q tRNA(Asp) synthetase (304 aa).

L-glutamate is bound by residues 14–18 (RFAPS) and Glu-50. Residues 17-27 (PSPSGPLHFGS) carry the 'HIGH' region motif. 4 residues coordinate Zn(2+): Cys-106, Cys-108, Tyr-120, and Cys-124. Positions 178 and 196 each coordinate L-glutamate. A 'KMSKS' region motif is present at residues 234–238 (KLSKQ). Residue Lys-237 participates in ATP binding.

The protein belongs to the class-I aminoacyl-tRNA synthetase family. GluQ subfamily. Requires Zn(2+) as cofactor.

In terms of biological role, catalyzes the tRNA-independent activation of glutamate in presence of ATP and the subsequent transfer of glutamate onto a tRNA(Asp). Glutamate is transferred on the 2-amino-5-(4,5-dihydroxy-2-cyclopenten-1-yl) moiety of the queuosine in the wobble position of the QUC anticodon. The polypeptide is Glutamyl-Q tRNA(Asp) synthetase (Vibrio cholerae serotype O1 (strain ATCC 39315 / El Tor Inaba N16961)).